We begin with the raw amino-acid sequence, 24 residues long: Coenzyme PQQ synthesis protein A (24 aa).

Residues 16–20 (EITMY) constitute a cross-link (pyrroloquinoline quinone (Glu-Tyr)).

It belongs to the PqqA family.

The protein operates within cofactor biosynthesis; pyrroloquinoline quinone biosynthesis. Its function is as follows. Required for coenzyme pyrroloquinoline quinone (PQQ) biosynthesis. PQQ is probably formed by cross-linking a specific glutamate to a specific tyrosine residue and excising these residues from the peptide. This Cupriavidus taiwanensis (strain DSM 17343 / BCRC 17206 / CCUG 44338 / CIP 107171 / LMG 19424 / R1) (Ralstonia taiwanensis (strain LMG 19424)) protein is Coenzyme PQQ synthesis protein A.